A 529-amino-acid polypeptide reads, in one-letter code: V-set and immunoglobulin domain-containing protein 10 (529 aa).

Positions 1–18 (MMITSAVVLYLLLLSHQT) are cleaved as a signal peptide. 2 consecutive Ig-like C2-type domains span residues 19–110 (VSEE…QTLS) and 129–217 (PATF…QELL). Residues 21–411 (EEQVQQFVIG…LNVKTSAGNG (391 aa)) lie on the Extracellular side of the membrane. Residues Asn-34, Asn-35, Asn-46, Asn-135, Asn-147, Asn-159, Asn-211, Asn-269, Asn-280, Asn-284, Asn-330, Asn-357, and Asn-376 are each glycosylated (N-linked (GlcNAc...) asparagine). Cys-40 and Cys-96 are joined by a disulfide. A disulfide bridge links Cys-150 with Cys-199. Positions 317–403 (PTGQPLATAL…GARELEVYLN (87 aa)) constitute an Ig-like C2-type 3 domain. A disulfide bond links Cys-335 and Cys-387. A helical transmembrane segment spans residues 412–432 (GAIVGIFVSVLVMMIGIVVGV). Topologically, residues 433–529 (TVYTKRDRIC…PQRAELQPAV (97 aa)) are cytoplasmic.

It localises to the membrane. This is V-set and immunoglobulin domain-containing protein 10 (vsig10) from Danio rerio (Zebrafish).